A 206-amino-acid polypeptide reads, in one-letter code: Small ribosomal subunit protein uS4 (206 aa).

The S4 RNA-binding domain maps to 96–157; that stretch reads GRLDNVVYRM…KAKKQSRVRA (62 aa).

The protein belongs to the universal ribosomal protein uS4 family. Part of the 30S ribosomal subunit. Contacts protein S5. The interaction surface between S4 and S5 is involved in control of translational fidelity.

In terms of biological role, one of the primary rRNA binding proteins, it binds directly to 16S rRNA where it nucleates assembly of the body of the 30S subunit. Its function is as follows. With S5 and S12 plays an important role in translational accuracy. In Sodalis glossinidius (strain morsitans), this protein is Small ribosomal subunit protein uS4.